The following is a 529-amino-acid chain: Peptide chain release factor 3 (529 aa).

One can recognise a tr-type G domain in the interval 10 to 278 (ARRRTFAIIS…MFVEFAPGPQ (269 aa)). Residues 19–26 (SHPDAGKT), 87–91 (DTPGH), and 141–144 (NKMD) each bind GTP.

It belongs to the TRAFAC class translation factor GTPase superfamily. Classic translation factor GTPase family. PrfC subfamily.

It is found in the cytoplasm. Increases the formation of ribosomal termination complexes and stimulates activities of RF-1 and RF-2. It binds guanine nucleotides and has strong preference for UGA stop codons. It may interact directly with the ribosome. The stimulation of RF-1 and RF-2 is significantly reduced by GTP and GDP, but not by GMP. The polypeptide is Peptide chain release factor 3 (Nitratidesulfovibrio vulgaris (strain DSM 19637 / Miyazaki F) (Desulfovibrio vulgaris)).